The primary structure comprises 1205 residues: ATP-dependent DNA helicase MER3 homolog (1205 aa).

The 196-residue stretch at 41 to 236 folds into the Helicase ATP-binding domain; sequence PACFLSDVNM…WLAVPSEGIK (196 aa). 54 to 61 lines the ATP pocket; sequence APTGSGKT. A DEAH box motif is present at residues 172–175; that stretch reads DEVH. Positions 266–467 constitute a Helicase C-terminal domain; the sequence is RLQSFIFDIL…CAVEHLNAEI (202 aa). An SEC63 domain is found at 541–852; it reads PLEPGRLMTK…FEEYVGLDIH (312 aa). Over residues 1075-1091 the composition is skewed to polar residues; it reads QKSEILNRTQGKNSTQL. Residues 1075–1131 form a disordered region; the sequence is QKSEILNRTQGKNSTQLAGKKAFEKSKTPDENSLHFVGKRDSSSEKSKALSKTPDEN. Basic and acidic residues predominate over residues 1095 to 1122; that stretch reads KAFEKSKTPDENSLHFVGKRDSSSEKSK.

It belongs to the helicase family. SKI2 subfamily. In terms of tissue distribution, transcribed preferentially in early stages of meiocyte development and during meiosis in young flowers.

The protein localises to the nucleus. The protein resides in the chromosome. The enzyme catalyses Couples ATP hydrolysis with the unwinding of duplex DNA by translocating in the 3'-5' direction.. It catalyses the reaction ATP + H2O = ADP + phosphate + H(+). Functionally, DNA helicase required for crossover formation, complete synapsis of homologous chromosomes and bivalent formation during meiosis. Is specific to recombination events resulting in interference-sensitive crossovers (class I meiotic crossover). Works cooperatively with ZIP4 to promote crossovers. The polypeptide is ATP-dependent DNA helicase MER3 homolog (Oryza sativa subsp. japonica (Rice)).